Consider the following 215-residue polypeptide: Nucleoredoxin-like protein 1 (215 aa).

Positions 1–165 constitute a Thioredoxin; atypical domain; sequence MADLFLDKIL…VSEIIDRSFL (165 aa). Over residues 185 to 194 the composition is skewed to basic and acidic residues; sequence IKYKDETTNE. A disordered region spans residues 185–215; sequence IKYKDETTNEKKKRKHCDDEDEGGGGGTEFF.

Belongs to the nucleoredoxin family.

It localises to the cell projection. The protein localises to the cilium. Its subcellular location is the photoreceptor outer segment. In terms of biological role, plays an important role in retinal cone photoreceptor survival. May play a role in cone cell viability, slowing down cone degeneration, does not seem to play a role in degenerating rods. The protein is Nucleoredoxin-like protein 1 (nxnl1) of Xenopus laevis (African clawed frog).